A 90-amino-acid chain; its full sequence is Acylphosphatase (90 aa).

An Acylphosphatase-like domain is found at 4-90 (TVHLRITGHV…KGQYKDFRIY (87 aa)). Residues Arg-19 and Asn-37 contribute to the active site.

This sequence belongs to the acylphosphatase family.

It carries out the reaction an acyl phosphate + H2O = a carboxylate + phosphate + H(+). The sequence is that of Acylphosphatase (acyP) from Caldanaerobacter subterraneus subsp. tengcongensis (strain DSM 15242 / JCM 11007 / NBRC 100824 / MB4) (Thermoanaerobacter tengcongensis).